The sequence spans 303 residues: Ribose-5-phosphate isomerase (303 aa).

Residues 22–33 (AGGAASGGGGNN) are compositionally biased toward gly residues. The segment at 22-75 (AGGAASGGGGNNWGLSGSHVQLPGRAHSETRGDKGGSSAGGPAPSTMSKAEEAK) is disordered. Arg52 carries the post-translational modification Omega-N-methylarginine. Ser99 is modified (phosphoserine).

The protein belongs to the ribose 5-phosphate isomerase family. In terms of tissue distribution, widely expressed, with highest levels in testis.

The catalysed reaction is aldehydo-D-ribose 5-phosphate = D-ribulose 5-phosphate. It functions in the pathway carbohydrate degradation; pentose phosphate pathway; D-ribose 5-phosphate from D-ribulose 5-phosphate (non-oxidative stage): step 1/1. This Mus musculus (Mouse) protein is Ribose-5-phosphate isomerase (Rpia).